The sequence spans 219 residues: Probable GTP-binding protein EngB (219 aa).

The EngB-type G domain occupies 31–205 (VGVEIAFAGR…LSILNEWCHP (175 aa)). Residues 39–46 (GRSNAGKS), 66–70 (GRTQL), 84–87 (DLPG), 151–154 (TKSD), and 184–186 (FSA) each bind GTP. Mg(2+) is bound by residues serine 46 and threonine 68.

It belongs to the TRAFAC class TrmE-Era-EngA-EngB-Septin-like GTPase superfamily. EngB GTPase family. The cofactor is Mg(2+).

In terms of biological role, necessary for normal cell division and for the maintenance of normal septation. The sequence is that of Probable GTP-binding protein EngB from Shewanella sp. (strain ANA-3).